Here is a 336-residue protein sequence, read N- to C-terminus: MKDRYILAFETSCDETSVAVLKNDDELLSNVIASQIESHKRFGGVVPEVASRHHVEVITACIEEALAEAGITEEDVTAVAVTYGPGLVGALLVGLSAAKAFAWAHGLPLIPVNHMAGHLMAAQSVEPLEFPLLALLVSGGHTELVYVSEAGDYKIVGETRDDAVGEAYDKVGRVMGLTYPAGREIDELAHQGQDIYDFPRAMIKEDNLEFSFSGLKSAFINLHHNAEQKGESLSTEDLCASFQAAVLDILMAKTKKALEKYPVKTLVVAGGVAANKGLRERLAAEVTDVKVIIPPLRLCGDNAGMIAYASVSEWNKENFAGWNLNAKPSLAFDTME.

Residues His-114 and His-118 each contribute to the Fe cation site. Substrate-binding positions include 136 to 140, Asp-169, Gly-182, Asp-186, and Asn-275; that span reads LVSGG. Asp-301 lines the Fe cation pocket.

It belongs to the KAE1 / TsaD family. The cofactor is Fe(2+).

The protein localises to the cytoplasm. It carries out the reaction L-threonylcarbamoyladenylate + adenosine(37) in tRNA = N(6)-L-threonylcarbamoyladenosine(37) in tRNA + AMP + H(+). Its function is as follows. Required for the formation of a threonylcarbamoyl group on adenosine at position 37 (t(6)A37) in tRNAs that read codons beginning with adenine. Is involved in the transfer of the threonylcarbamoyl moiety of threonylcarbamoyl-AMP (TC-AMP) to the N6 group of A37, together with TsaE and TsaB. TsaD likely plays a direct catalytic role in this reaction. This is tRNA N6-adenosine threonylcarbamoyltransferase from Streptococcus pneumoniae (strain CGSP14).